A 160-amino-acid polypeptide reads, in one-letter code: Cytochrome b6-f complex subunit 4 (160 aa).

3 helical membrane passes run Leu-36–Val-56, Leu-95–Glu-115, and Ala-131–Ile-151.

The protein belongs to the cytochrome b family. PetD subfamily. The 4 large subunits of the cytochrome b6-f complex are cytochrome b6, subunit IV (17 kDa polypeptide, PetD), cytochrome f and the Rieske protein, while the 4 small subunits are PetG, PetL, PetM and PetN. The complex functions as a dimer.

It localises to the cellular thylakoid membrane. Its function is as follows. Component of the cytochrome b6-f complex, which mediates electron transfer between photosystem II (PSII) and photosystem I (PSI), cyclic electron flow around PSI, and state transitions. The protein is Cytochrome b6-f complex subunit 4 of Prochlorococcus marinus (strain SARG / CCMP1375 / SS120).